We begin with the raw amino-acid sequence, 233 residues long: Auxin-responsive protein IAA11 (233 aa).

Disordered stretches follow at residues 1–27 (MAGL…RSSG) and 46–100 (PAAV…PKAQ). The EAR-like (transcriptional repression) motif lies at 11 to 15 (LRLGL). Over residues 54–63 (GAQEDKEDAD) the composition is skewed to acidic residues. Residues 122-217 (AALVKVSMDG…SCKRLRIMKG (96 aa)) enclose the PB1 domain.

This sequence belongs to the Aux/IAA family. As to quaternary structure, homodimers and heterodimers. In terms of tissue distribution, highly expressed in etiolated shoots. Expressed in roots.

The protein resides in the nucleus. Its function is as follows. Aux/IAA proteins are short-lived transcriptional factors that function as repressors of early auxin response genes at low auxin concentrations. The chain is Auxin-responsive protein IAA11 (IAA11) from Oryza sativa subsp. japonica (Rice).